We begin with the raw amino-acid sequence, 574 residues long: MEPNSLRTKVPAFLSDLGKATLRGIRKCPRCGTYNGTRGLSCKNKTCGTIFRYGARKQPSVEAVKIITGSDLQVYSVRQRDRGPDYRCFVELGVSETTIQTVDGTIITQLSSGRCYVPSCLKAATQGVVENQCQHIKLAVNCQAEATPLTLKSSVLNAMQASPETKQTIWQLATEPTGPLVQRITKNILVVKCKASQKHSLGYLHTSFVQKVSGKSLPERRFFCSCQTLKSHKSNASKDETAQRCIHFFACICAFASDETLAQEFSDFLNFDSSGLKEIIVPQLGCHSESTVSACESTASKSKKRRKDEVSGAQMNSSLLPQDAVSSNLRKSGLKKPVVASSLKRQACGQLLDEAQVTLSFQDWLASVTERIHQTMHYQFDGKPEPLVFHIPQSFFDALQQRISIGSAKKRLPNSTTAFVRKDALPLGTFSKYTWHITNILQVKQILDTPEMPLEITRSFIQNRDGTYELFKCPKVEVESIAETYGRIEKQPVLRPLELKTFLKVGNTSPDQKEPTPFIIEWIPDILPQSKIGELRIKFEYGHHRNGHVAEYQDQRPPLDQPLELAPLTTITFP.

This is an uncharacterized protein from Homo sapiens (Human).